The chain runs to 718 residues: Ribosome-releasing factor 2, mitochondrial (718 aa).

The N-terminal 29 residues, 1-29 (MLKCAWQNGPRQSNRWLWQLSNQIWKRSY), are a transit peptide targeting the mitochondrion. The 280-residue stretch at 31 to 310 (SKIRNIGILA…AVNSYLPAPE (280 aa)) folds into the tr-type G domain. Residues 40-47 (AHIDAGKT), 104-108 (DTPGH), and 158-161 (NKMD) contribute to the GTP site.

Belongs to the TRAFAC class translation factor GTPase superfamily. Classic translation factor GTPase family. EF-G/EF-2 subfamily.

It is found in the mitochondrion. Its function is as follows. Mitochondrial GTPase that mediates the disassembly of ribosomes from messenger RNA at the termination of mitochondrial protein biosynthesis. Not involved in the GTP-dependent ribosomal translocation step during translation elongation. The protein is Ribosome-releasing factor 2, mitochondrial of Drosophila erecta (Fruit fly).